The sequence spans 163 residues: Nucleotide-binding protein GWCH70_0711 (163 aa).

It belongs to the YajQ family.

In terms of biological role, nucleotide-binding protein. The protein is Nucleotide-binding protein GWCH70_0711 of Geobacillus sp. (strain WCH70).